The primary structure comprises 396 residues: L-lactate dehydrogenase (396 aa).

The 380-residue stretch at 1 to 380 folds into the FMN hydroxy acid dehydrogenase domain; the sequence is MIISAASDYR…TQDSLVQGLG (380 aa). Tyr-24 is a substrate binding site. FMN contacts are provided by Ser-106 and Gln-127. Residue Tyr-129 participates in substrate binding. Residue Thr-155 coordinates FMN. Substrate is bound at residue Arg-164. Lys-251 contributes to the FMN binding site. The Proton acceptor role is filled by His-275. A substrate-binding site is contributed by Arg-278. An FMN-binding site is contributed by 306-330; that stretch reads DSGIRNGLDVVRMIALGADTVLLGR.

The protein belongs to the FMN-dependent alpha-hydroxy acid dehydrogenase family. Requires FMN as cofactor.

It is found in the cell inner membrane. The catalysed reaction is (S)-lactate + A = pyruvate + AH2. In terms of biological role, catalyzes the conversion of L-lactate to pyruvate. Is coupled to the respiratory chain. The polypeptide is L-lactate dehydrogenase (Shigella flexneri serotype 5b (strain 8401)).